A 145-amino-acid chain; its full sequence is RNA polymerase I-specific transcription initiation factor RRN10 (145 aa).

Component of the UAF (upstream activation factor) complex which consists of UAF30, RRN5, RRN9, RRN10, and histones H3 and H4.

It is found in the nucleus. It localises to the nucleolus. In terms of biological role, component of the UAF (upstream activation factor) complex which interacts with the upstream element of the RNA polymerase I promoter and forms a stable preinitiation complex. Together with SPT15/TBP UAF seems to stimulate basal transcription to a fully activated level. The protein is RNA polymerase I-specific transcription initiation factor RRN10 (RRN10) of Saccharomyces cerevisiae (strain ATCC 204508 / S288c) (Baker's yeast).